The following is a 698-amino-acid chain: UvrABC system protein B (698 aa).

Residues 28-414 form the Helicase ATP-binding domain; sequence RRILAGERDV…SGGEFVEQVI (387 aa). Residue 41–48 coordinates ATP; sequence GATGTGKS. A Beta-hairpin motif is present at residues 94–117; sequence YYDYYQPEAYIAQTDTYIEKDSSI. The 167-residue stretch at 432–598 folds into the Helicase C-terminal domain; that stretch reads QIDDLIGEIR…PLRKKIADIL (167 aa). Residues 609–629 are disordered; it reads DTVQVGGSGRNVSRGRRAQSE. A UVR domain is found at 653 to 688; that stretch reads ADLIKDLTAQMMAAASDLQFELAARFRDEIADLKKE.

The protein belongs to the UvrB family. In terms of assembly, forms a heterotetramer with UvrA during the search for lesions. Interacts with UvrC in an incision complex.

The protein resides in the cytoplasm. In terms of biological role, the UvrABC repair system catalyzes the recognition and processing of DNA lesions. A damage recognition complex composed of 2 UvrA and 2 UvrB subunits scans DNA for abnormalities. Upon binding of the UvrA(2)B(2) complex to a putative damaged site, the DNA wraps around one UvrB monomer. DNA wrap is dependent on ATP binding by UvrB and probably causes local melting of the DNA helix, facilitating insertion of UvrB beta-hairpin between the DNA strands. Then UvrB probes one DNA strand for the presence of a lesion. If a lesion is found the UvrA subunits dissociate and the UvrB-DNA preincision complex is formed. This complex is subsequently bound by UvrC and the second UvrB is released. If no lesion is found, the DNA wraps around the other UvrB subunit that will check the other stand for damage. The polypeptide is UvrABC system protein B (Mycobacterium leprae (strain TN)).